A 121-amino-acid chain; its full sequence is U15-barytoxin-Tl1a (121 aa).

The N-terminal stretch at 1 to 17 (MKLSVIVLVASFGFAVA) is a signal peptide. 4 cysteine pairs are disulfide-bonded: cysteine 56-cysteine 74, cysteine 67-cysteine 80, cysteine 71-cysteine 119, and cysteine 73-cysteine 90.

It belongs to the neurotoxin 03 (Tx2) family. 03 subfamily. In terms of tissue distribution, expressed by the venom gland.

The protein localises to the secreted. Functionally, ion channel inhibitor. The protein is U15-barytoxin-Tl1a of Trittame loki (Brush-footed trapdoor spider).